We begin with the raw amino-acid sequence, 465 residues long: GTPase Der (465 aa).

EngA-type G domains follow at residues P3–G167 and V179–T352. GTP-binding positions include G9–S16, D57–I61, N119–D122, G185–S192, D232–L236, and N297–D300. One can recognise a KH-like domain in the interval H353–A437.

This sequence belongs to the TRAFAC class TrmE-Era-EngA-EngB-Septin-like GTPase superfamily. EngA (Der) GTPase family. Associates with the 50S ribosomal subunit.

In terms of biological role, GTPase that plays an essential role in the late steps of ribosome biogenesis. This chain is GTPase Der, found in Xanthomonas campestris pv. campestris (strain 8004).